The following is a 139-amino-acid chain: Invertebrate-type lysozyme 3 (139 aa).

Residues 1–18 (MFVKSLVFLTIAVAYASA) form the signal peptide. Residues 19 to 138 (DCLHCICMRE…WNGIKSCCGC (120 aa)) enclose the I-type lysozyme domain. Intrachain disulfides connect Cys20–Cys106, Cys23–Cys138, Cys25–Cys31, Cys36–Cys45, Cys58–Cys86, Cys76–Cys82, and Cys98–Cys120. Glu28 acts as the Proton donor in catalysis. Asp39 acts as the Nucleophile in catalysis. Position 51–57 (51–57 (KLPYYED)) interacts with substrate. Residues Tyr90 and 113–115 (HNG) contribute to the substrate site.

It belongs to the glycosyl hydrolase 22 family. Type-I lysozyme subfamily. As to expression, expressed in pharynx grinder muscle pm7, isthmus marginal cell mc2 and pharyngeal muscle cell pm5, intestinal cells and at lower levels in coelomocytes and epidermis. Expressed at low levels in intestine.

The protein resides in the late endosome lumen. Its subcellular location is the recycling endosome lumen. The protein localises to the lysosome lumen. It localises to the secreted. The enzyme catalyses Hydrolysis of (1-&gt;4)-beta-linkages between N-acetylmuramic acid and N-acetyl-D-glucosamine residues in a peptidoglycan and between N-acetyl-D-glucosamine residues in chitodextrins.. In terms of biological role, has bacteriolytic activity against Gram-positive bacteria. Plays a role in defense against bacterial pathogens. Involved in pharyngeal grinder function by enabling proper lysis of ingested bacteria. The polypeptide is Invertebrate-type lysozyme 3 (Caenorhabditis elegans).